Here is a 207-residue protein sequence, read N- to C-terminus: MQNSDSGKKTFLIGITGMIGGGKSTATKILEEMGCFGINADRLAKRYTEPDSPILIELVELLGSEILDEQGKPDRKKISEIVFNNPEKLSRLNQLIHPLVRKDFQKILETTAKGKMVIWEVPLLFETDAYTLCDATVTVDSDPEESILRTISRDKVKKEDVLARIKNQLPLTEKLKRADYILRNRGNIDSLREECKSLYSTLLGKML.

The region spanning 12–207 (LIGITGMIGG…LYSTLLGKML (196 aa)) is the DPCK domain. 20–25 (GGGKST) contacts ATP.

This sequence belongs to the CoaE family.

It is found in the cytoplasm. The enzyme catalyses 3'-dephospho-CoA + ATP = ADP + CoA + H(+). Its pathway is cofactor biosynthesis; coenzyme A biosynthesis; CoA from (R)-pantothenate: step 5/5. In terms of biological role, catalyzes the phosphorylation of the 3'-hydroxyl group of dephosphocoenzyme A to form coenzyme A. The sequence is that of Dephospho-CoA kinase from Leptospira interrogans serogroup Icterohaemorrhagiae serovar Lai (strain 56601).